Reading from the N-terminus, the 292-residue chain is GTP cyclohydrolase FolE2 (292 aa).

It belongs to the GTP cyclohydrolase IV family.

The enzyme catalyses GTP + H2O = 7,8-dihydroneopterin 3'-triphosphate + formate + H(+). The protein operates within cofactor biosynthesis; 7,8-dihydroneopterin triphosphate biosynthesis; 7,8-dihydroneopterin triphosphate from GTP: step 1/1. In terms of biological role, converts GTP to 7,8-dihydroneopterin triphosphate. In Macrococcus caseolyticus (strain JCSC5402) (Macrococcoides caseolyticum), this protein is GTP cyclohydrolase FolE2.